A 419-amino-acid polypeptide reads, in one-letter code: D-amino acid dehydrogenase (419 aa).

Residue 3 to 17 (VLVLGAGVAGVSSVW) participates in FAD binding.

This sequence belongs to the DadA oxidoreductase family. It depends on FAD as a cofactor.

The enzyme catalyses a D-alpha-amino acid + A + H2O = a 2-oxocarboxylate + AH2 + NH4(+). Its pathway is amino-acid degradation; D-alanine degradation; NH(3) and pyruvate from D-alanine: step 1/1. In terms of biological role, oxidative deamination of D-amino acids. This is D-amino acid dehydrogenase from Neisseria gonorrhoeae (strain ATCC 700825 / FA 1090).